We begin with the raw amino-acid sequence, 524 residues long: uncharacterized protein (524 aa).

Residues 1–21 (MLLRSVWYKLGSLLIILPLTG) form the signal peptide. A lipid anchor (N-palmitoyl cysteine) is attached at cysteine 22. Residue cysteine 22 is the site of S-diacylglycerol cysteine attachment.

Belongs to the MG067/MG068/MG395 family.

It is found in the cell membrane. This is an uncharacterized protein from Mycoplasma pneumoniae (strain ATCC 29342 / M129 / Subtype 1) (Mycoplasmoides pneumoniae).